Consider the following 293-residue polypeptide: Signal recognition particle receptor FtsY (293 aa).

GTP-binding positions include 93 to 100, 175 to 179, and 239 to 242; these read GVNGAGKT, DTAGR, and TKLD.

The protein belongs to the GTP-binding SRP family. FtsY subfamily. In terms of assembly, part of the signal recognition particle protein translocation system, which is composed of SRP and FtsY. SRP is a ribonucleoprotein composed of Ffh and a 4.5S RNA molecule.

The protein resides in the cell inner membrane. It localises to the cytoplasm. The catalysed reaction is GTP + H2O = GDP + phosphate + H(+). Its function is as follows. Involved in targeting and insertion of nascent membrane proteins into the cytoplasmic membrane. Acts as a receptor for the complex formed by the signal recognition particle (SRP) and the ribosome-nascent chain (RNC). Interaction with SRP-RNC leads to the transfer of the RNC complex to the Sec translocase for insertion into the membrane, the hydrolysis of GTP by both Ffh and FtsY, and the dissociation of the SRP-FtsY complex into the individual components. The chain is Signal recognition particle receptor FtsY from Helicobacter pylori (strain ATCC 700392 / 26695) (Campylobacter pylori).